A 476-amino-acid polypeptide reads, in one-letter code: Adenosylhomocysteinase (476 aa).

3 residues coordinate substrate: threonine 67, aspartate 142, and glutamate 202. Position 203–205 (203–205 (TTT)) interacts with NAD(+). Residues lysine 232 and aspartate 236 each contribute to the substrate site. Residues asparagine 237, 266-271 (GYGDVG), glutamate 289, asparagine 324, 345-347 (IGH), and asparagine 390 each bind NAD(+).

This sequence belongs to the adenosylhomocysteinase family. The cofactor is NAD(+).

The protein localises to the cytoplasm. It carries out the reaction S-adenosyl-L-homocysteine + H2O = L-homocysteine + adenosine. It participates in amino-acid biosynthesis; L-homocysteine biosynthesis; L-homocysteine from S-adenosyl-L-homocysteine: step 1/1. Functionally, may play a key role in the regulation of the intracellular concentration of adenosylhomocysteine. The protein is Adenosylhomocysteinase of Parasynechococcus marenigrum (strain WH8102).